Reading from the N-terminus, the 307-residue chain is 4-hydroxy-3-methylbut-2-enyl diphosphate reductase (307 aa).

Position 13 (cysteine 13) interacts with [4Fe-4S] cluster. (2E)-4-hydroxy-3-methylbut-2-enyl diphosphate is bound by residues histidine 42 and histidine 75. Residues histidine 42 and histidine 75 each contribute to the dimethylallyl diphosphate site. Isopentenyl diphosphate is bound by residues histidine 42 and histidine 75. Cysteine 97 contributes to the [4Fe-4S] cluster binding site. Histidine 125 serves as a coordination point for (2E)-4-hydroxy-3-methylbut-2-enyl diphosphate. A dimethylallyl diphosphate-binding site is contributed by histidine 125. Histidine 125 is a binding site for isopentenyl diphosphate. Catalysis depends on glutamate 127, which acts as the Proton donor. Threonine 165 contacts (2E)-4-hydroxy-3-methylbut-2-enyl diphosphate. Cysteine 195 is a binding site for [4Fe-4S] cluster. (2E)-4-hydroxy-3-methylbut-2-enyl diphosphate contacts are provided by serine 223, serine 224, asparagine 225, and serine 267. Dimethylallyl diphosphate is bound by residues serine 223, serine 224, asparagine 225, and serine 267. Positions 223, 224, 225, and 267 each coordinate isopentenyl diphosphate.

Belongs to the IspH family. Requires [4Fe-4S] cluster as cofactor.

The catalysed reaction is isopentenyl diphosphate + 2 oxidized [2Fe-2S]-[ferredoxin] + H2O = (2E)-4-hydroxy-3-methylbut-2-enyl diphosphate + 2 reduced [2Fe-2S]-[ferredoxin] + 2 H(+). It catalyses the reaction dimethylallyl diphosphate + 2 oxidized [2Fe-2S]-[ferredoxin] + H2O = (2E)-4-hydroxy-3-methylbut-2-enyl diphosphate + 2 reduced [2Fe-2S]-[ferredoxin] + 2 H(+). Its pathway is isoprenoid biosynthesis; dimethylallyl diphosphate biosynthesis; dimethylallyl diphosphate from (2E)-4-hydroxy-3-methylbutenyl diphosphate: step 1/1. The protein operates within isoprenoid biosynthesis; isopentenyl diphosphate biosynthesis via DXP pathway; isopentenyl diphosphate from 1-deoxy-D-xylulose 5-phosphate: step 6/6. Its function is as follows. Catalyzes the conversion of 1-hydroxy-2-methyl-2-(E)-butenyl 4-diphosphate (HMBPP) into a mixture of isopentenyl diphosphate (IPP) and dimethylallyl diphosphate (DMAPP). Acts in the terminal step of the DOXP/MEP pathway for isoprenoid precursor biosynthesis. This is 4-hydroxy-3-methylbut-2-enyl diphosphate reductase from Chlamydia trachomatis serovar D (strain ATCC VR-885 / DSM 19411 / UW-3/Cx).